The following is a 445-amino-acid chain: UPF0210 protein SEQ_0468 (445 aa).

It belongs to the UPF0210 family. Homodimer.

The polypeptide is UPF0210 protein SEQ_0468 (Streptococcus equi subsp. equi (strain 4047)).